The primary structure comprises 425 residues: Glyco-Gag protein (425 aa).

At 1-54 the chain is on the cytoplasmic side; the sequence is MSRASSGTATGARLFGISSVLGEYRVLIGDEGAGPSRSPSEVSFSVWYRSRAAR. The helical transmembrane segment at 55 to 75 threads the bilayer; it reads LVIVCLVASFLVPCLTFLIAE. Topologically, residues 76 to 425 are extracellular; that stretch reads TVMGQTITTP…VVQGKEETPA (350 aa). An N-linked (GlcNAc...) asparagine; by host glycan is attached at Asn137. The segment at 174-285 is disordered; it reads VRPFLPPPKP…LREGPNNRPQ (112 aa). Residues 177 to 196 show a composition bias toward pro residues; it reads FLPPPKPPTSLPQPLSPQPS. Low complexity predominate over residues 197–209; it reads APLTSSLYPVLPK. Pro residues-rich tracts occupy residues 213-223 and 233-248; these read PKPPVLPPDPS and EPPP…PSGP.

In terms of processing, glycosylated by host. Post-translationally, cleaved by host near the middle of the molecule, releasing the c-terminal half containing capsid and nucleoprotein domains op GAG.

Its subcellular location is the host cell membrane. Plays a role in viral particle release. Presumably acts by facilitating the fission of the virion bud at the cell surface. The polypeptide is Glyco-Gag protein (Felidae (cat family)).